Consider the following 1399-residue polypeptide: DNA-directed RNA polymerase subunit beta' (1399 aa).

Zn(2+) is bound by residues Cys71, Cys73, Cys86, and Cys89. Residues Asp462, Asp464, and Asp466 each coordinate Mg(2+). Residues Cys810, Cys884, Cys891, and Cys894 each coordinate Zn(2+).

Belongs to the RNA polymerase beta' chain family. In terms of assembly, the RNAP catalytic core consists of 2 alpha, 1 beta, 1 beta' and 1 omega subunit. When a sigma factor is associated with the core the holoenzyme is formed, which can initiate transcription. Mg(2+) is required as a cofactor. Requires Zn(2+) as cofactor.

The enzyme catalyses RNA(n) + a ribonucleoside 5'-triphosphate = RNA(n+1) + diphosphate. Its function is as follows. DNA-dependent RNA polymerase catalyzes the transcription of DNA into RNA using the four ribonucleoside triphosphates as substrates. The sequence is that of DNA-directed RNA polymerase subunit beta' from Chelativorans sp. (strain BNC1).